We begin with the raw amino-acid sequence, 296 residues long: Light-independent protochlorophyllide reductase iron-sulfur ATP-binding protein (296 aa).

ATP contacts are provided by residues 39 to 44 (GIGKST) and lysine 68. Residue serine 43 participates in Mg(2+) binding. [4Fe-4S] cluster contacts are provided by cysteine 124 and cysteine 158. 209 to 210 (NR) provides a ligand contact to ATP.

The protein belongs to the NifH/BchL/ChlL family. Homodimer. Protochlorophyllide reductase is composed of three subunits; ChlL, ChlN and ChlB. [4Fe-4S] cluster is required as a cofactor.

The enzyme catalyses chlorophyllide a + oxidized 2[4Fe-4S]-[ferredoxin] + 2 ADP + 2 phosphate = protochlorophyllide a + reduced 2[4Fe-4S]-[ferredoxin] + 2 ATP + 2 H2O. The protein operates within porphyrin-containing compound metabolism; chlorophyll biosynthesis (light-independent). Component of the dark-operative protochlorophyllide reductase (DPOR) that uses Mg-ATP and reduced ferredoxin to reduce ring D of protochlorophyllide (Pchlide) to form chlorophyllide a (Chlide). This reaction is light-independent. The L component serves as a unique electron donor to the NB-component of the complex, and binds Mg-ATP. The chain is Light-independent protochlorophyllide reductase iron-sulfur ATP-binding protein from Prochlorococcus marinus (strain MIT 9313).